A 350-amino-acid chain; its full sequence is RING finger protein 44 (350 aa).

The RING-type; atypical zinc finger occupies 298-339 (CVVCFSDFEVRQLLRVLPCNHEFHAKCVDKWLKANRTCPICR).

The chain is RING finger protein 44 (Rnf44) from Rattus norvegicus (Rat).